Consider the following 531-residue polypeptide: Apolipoprotein N-acyltransferase (531 aa).

7 consecutive transmembrane segments (helical) span residues Ile-8–Val-28, Phe-34–Val-54, Pro-69–Gly-89, Leu-105–Ala-125, Ile-136–Gly-156, Val-178–Ile-198, and Ala-206–Leu-226. Residues Val-243 to Gly-493 enclose the CN hydrolase domain. Glu-287 serves as the catalytic Proton acceptor. Lys-351 is a catalytic residue. The active-site Nucleophile is the Cys-405. A helical membrane pass occupies residues Ile-507–Asn-527.

Belongs to the CN hydrolase family. Apolipoprotein N-acyltransferase subfamily.

The protein resides in the cell inner membrane. It catalyses the reaction N-terminal S-1,2-diacyl-sn-glyceryl-L-cysteinyl-[lipoprotein] + a glycerophospholipid = N-acyl-S-1,2-diacyl-sn-glyceryl-L-cysteinyl-[lipoprotein] + a 2-acyl-sn-glycero-3-phospholipid + H(+). The protein operates within protein modification; lipoprotein biosynthesis (N-acyl transfer). Catalyzes the phospholipid dependent N-acylation of the N-terminal cysteine of apolipoprotein, the last step in lipoprotein maturation. This chain is Apolipoprotein N-acyltransferase, found in Rhizobium meliloti (strain 1021) (Ensifer meliloti).